The sequence spans 676 residues: Head-specific guanylate cyclase (676 aa).

The Guanylate cyclase domain occupies 466 to 593 (TILFSDIVGF…HSVTIANKFE (128 aa)).

Belongs to the adenylyl cyclase class-4/guanylyl cyclase family. As to quaternary structure, heterodimer. In terms of tissue distribution, head, where it is preferentially expressed in the CNS and the retina. Not found in bodies.

The protein resides in the cytoplasm. The enzyme catalyses GTP = 3',5'-cyclic GMP + diphosphate. May have a role in phototransduction. Catalyzes the conversion of GTP to cGMP, a common second messenger that is utilized in a wide variety of cells and signal transduction pathways. A second subunit is required for enzyme activity. The protein is Head-specific guanylate cyclase (Gycalpha99B) of Drosophila melanogaster (Fruit fly).